Reading from the N-terminus, the 971-residue chain is Dynamin-like GTPase OPA1, mitochondrial (971 aa).

A mitochondrion-targeting transit peptide spans 1 to 89 (MLRVGRAVAC…GGWRYQQHRS (89 aa)). Residues 90–98 (FWMLRLASR) lie on the Mitochondrial matrix side of the membrane. A helical membrane pass occupies residues 99–115 (LLKLRYIVLGSAVGGGY). Residues 116-781 (TAKKTYEEWK…SVINDMVGPD (666 aa)) are Mitochondrial intermembrane-facing. The interval 204-224 (EAPVTATPEASDKQFKKSSDK) is disordered. The span at 213–224 (ASDKQFKKSSDK) shows a compositional bias: basic and acidic residues. The stretch at 219–265 (KKSSDKEKVDQLQEELLRTQMKYQRMLERLEKENKDLRKVVLQKDEK) forms a coiled coil. The Dynamin-type G domain occupies 297-572 (QDHLPRVVVV…FWKMVRESVE (276 aa)). Positions 307 to 314 (GDQSAGKT) are G1 motif. GTP-binding residues include Ser-310, Gly-312, Lys-313, Thr-314, Ser-315, and Gly-329. Residue Thr-314 coordinates Mg(2+). Positions 333 to 336 (MMTR) are G2 motif. Residues Thr-335 and Asp-410 each contribute to the Mg(2+) site. The interval 410-413 (DLPG) is G3 motif. The interval 478–481 (TKVD) is G4 motif. GTP-binding residues include Lys-479, Asp-481, and Thr-514. The interval 512–515 (VVTG) is G5 motif. Stalk region regions lie at residues 600–847 (DRNE…IKDT) and 885–939 (CNDV…VHLI). The segment at 747-867 (TDKPQWDAAI…QKALQHCNLC (121 aa)) is paddle region. The stretch at 782 to 792 (WKQRWMSWKNR) is an intramembrane region. Topologically, residues 793 to 971 (SPEQHTRNET…AFIEALHKEK (179 aa)) are mitochondrial intermembrane. A disulfide bond links Cys-867 and Cys-885. Positions 906 to 971 (RQQLTNTEVR…AFIEALHKEK (66 aa)) form a coiled coil.

This sequence belongs to the TRAFAC class dynamin-like GTPase superfamily. Dynamin/Fzo/YdjA family. In terms of assembly, oligomeric complex consisting of membrane-bound and soluble forms of OPA1. Post-translationally, cleaved by OMA1 or YME1L downstream of the transmembrane region in response to different signals to generate soluble forms. Cleaved by OMA1 at position S1 following stress conditions, generating the short soluble form (Dynamin-like GTPase OPA1, short form; S-OPA1). Strongly expressed in the brain, ovary and skeletal muscle. In the brain, expression of the mRNA was observed specifically in motor neurons, in nucleus oculomotorius, in nucleus valvulae lateralis, in the medulla oblongata and in the spinal cord.

It localises to the mitochondrion inner membrane. The protein localises to the mitochondrion intermembrane space. It carries out the reaction GTP + H2O = GDP + phosphate + H(+). Its function is as follows. Dynamin-related GTPase that is essential for normal mitochondrial morphology by mediating fusion of the mitochondrial inner membranes, regulating cristae morphology and maintaining respiratory chain function. Exists in two forms: the transmembrane, long form (Dynamin-like GTPase OPA1, long form; L-OPA1), which is tethered to the inner mitochondrial membrane, and the short soluble form (Dynamin-like GTPase OPA1, short form; S-OPA1), which results from proteolytic cleavage and localizes in the intermembrane space. Both forms (L-OPA1 and S-OPA1) cooperate to catalyze the fusion of the mitochondrial inner membrane. The equilibrium between L-OPA1 and S-OPA1 is essential: excess levels of S-OPA1, produced by cleavage by OMA1 following loss of mitochondrial membrane potential, lead to an impaired equilibrium between L-OPA1 and S-OPA1, inhibiting mitochondrial fusion. The balance between L-OPA1 and S-OPA1 also influences cristae shape and morphology. Its role in mitochondrial morphology is required for mitochondrial genome maintenance. Constitutes the transmembrane long form (L-OPA1) that plays a central role in mitochondrial inner membrane fusion and cristae morphology. L-OPA1 and the soluble short form (S-OPA1) form higher-order helical assemblies that coordinate the fusion of mitochondrial inner membranes. Inner membrane-anchored L-OPA1 molecules initiate membrane remodeling by recruiting soluble S-OPA1 to rapidly polymerize into a flexible cylindrical scaffold encaging the mitochondrial inner membrane. Once at the membrane surface, the formation of S-OPA1 helices induce bilayer curvature. OPA1 dimerization through the paddle region, which inserts into cardiolipin-containing membrane, promotes GTP hydrolysis and the helical assembly of a flexible OPA1 lattice on the membrane, which drives membrane curvature and mitochondrial fusion. Plays a role in the maintenance and remodeling of mitochondrial cristae, some invaginations of the mitochondrial inner membrane that provide an increase in the surface area. Probably acts by forming helical filaments at the inside of inner membrane tubes with the shape and dimensions of crista junctions. In terms of biological role, constitutes the soluble short form (S-OPA1) generated by cleavage by OMA1, which plays a central role in mitochondrial inner membrane fusion and cristae morphology. The transmembrane long form (L-OPA1) and the S-OPA1 form higher-order helical assemblies that coordinate the fusion of mitochondrial inner membranes. Inner membrane-anchored L-OPA1 molecules initiate membrane remodeling by recruiting soluble S-OPA1 to rapidly polymerize into a flexible cylindrical scaffold encaging the mitochondrial inner membrane. Once at the membrane surface, the formation of S-OPA1 helices induce bilayer curvature. OPA1 dimerization through the paddle region, which inserts into cardiolipin-containing membrane, promotes GTP hydrolysis and the helical assembly of a flexible OPA1 lattice on the membrane, which drives membrane curvature and mitochondrial fusion. Excess levels of S-OPA1 produced by cleavage by OMA1 following stress conditions that induce loss of mitochondrial membrane potential, lead to an impaired equilibrium between L-OPA1 and S-OPA1, thereby inhibiting mitochondrial fusion. Plays a role in the maintenance and remodeling of mitochondrial cristae, some invaginations of the mitochondrial inner membrane that provide an increase in the surface area. Probably acts by forming helical filaments at the inside of inner membrane tubes with the shape and dimensions of crista junctions. This is Dynamin-like GTPase OPA1, mitochondrial (opa1) from Oncorhynchus masou (Cherry salmon).